The primary structure comprises 318 residues: Biotin synthase (318 aa).

A Radical SAM core domain is found at 44 to 273; sequence LCGNKFDLCT…TVQIRLAGGR (230 aa). Residues cysteine 62, cysteine 66, and cysteine 69 each contribute to the [4Fe-4S] cluster site. Positions 106, 138, 198, and 268 each coordinate [2Fe-2S] cluster.

The protein belongs to the radical SAM superfamily. Biotin synthase family. As to quaternary structure, homodimer. Requires [4Fe-4S] cluster as cofactor. [2Fe-2S] cluster serves as cofactor.

The catalysed reaction is (4R,5S)-dethiobiotin + (sulfur carrier)-SH + 2 reduced [2Fe-2S]-[ferredoxin] + 2 S-adenosyl-L-methionine = (sulfur carrier)-H + biotin + 2 5'-deoxyadenosine + 2 L-methionine + 2 oxidized [2Fe-2S]-[ferredoxin]. Its pathway is cofactor biosynthesis; biotin biosynthesis; biotin from 7,8-diaminononanoate: step 2/2. In terms of biological role, catalyzes the conversion of dethiobiotin (DTB) to biotin by the insertion of a sulfur atom into dethiobiotin via a radical-based mechanism. The polypeptide is Biotin synthase (Clostridium botulinum (strain Hall / ATCC 3502 / NCTC 13319 / Type A)).